The chain runs to 201 residues: 3-isopropylmalate dehydratase small subunit (201 aa).

Belongs to the LeuD family. LeuD type 1 subfamily. As to quaternary structure, heterodimer of LeuC and LeuD.

The catalysed reaction is (2R,3S)-3-isopropylmalate = (2S)-2-isopropylmalate. The protein operates within amino-acid biosynthesis; L-leucine biosynthesis; L-leucine from 3-methyl-2-oxobutanoate: step 2/4. Its function is as follows. Catalyzes the isomerization between 2-isopropylmalate and 3-isopropylmalate, via the formation of 2-isopropylmaleate. The protein is 3-isopropylmalate dehydratase small subunit of Shewanella oneidensis (strain ATCC 700550 / JCM 31522 / CIP 106686 / LMG 19005 / NCIMB 14063 / MR-1).